The chain runs to 459 residues: Exodeoxyribonuclease 7 large subunit (459 aa).

The protein belongs to the XseA family. Heterooligomer composed of large and small subunits.

Its subcellular location is the cytoplasm. It catalyses the reaction Exonucleolytic cleavage in either 5'- to 3'- or 3'- to 5'-direction to yield nucleoside 5'-phosphates.. Its function is as follows. Bidirectionally degrades single-stranded DNA into large acid-insoluble oligonucleotides, which are then degraded further into small acid-soluble oligonucleotides. The protein is Exodeoxyribonuclease 7 large subunit of Yersinia pseudotuberculosis serotype O:3 (strain YPIII).